Here is a 277-residue protein sequence, read N- to C-terminus: Undecaprenyl-diphosphatase (277 aa).

Helical transmembrane passes span 88–108, 117–137, 157–179, 191–211, 227–247, and 255–275; these read MGWL…LFQD, MWIV…ADAV, FAQA…AGLL, SFLL…YKTV, LATV…LKFV, and FVWY…FNVI.

It belongs to the UppP family.

Its subcellular location is the cell membrane. The enzyme catalyses di-trans,octa-cis-undecaprenyl diphosphate + H2O = di-trans,octa-cis-undecaprenyl phosphate + phosphate + H(+). Its function is as follows. Catalyzes the dephosphorylation of undecaprenyl diphosphate (UPP). Confers resistance to bacitracin. The protein is Undecaprenyl-diphosphatase of Paenarthrobacter aurescens (strain TC1).